The following is a 302-amino-acid chain: Ornithine carbamoyltransferase (302 aa).

Carbamoyl phosphate is bound by residues 52-55 (STRT), glutamine 79, arginine 103, and 130-133 (HPCQ). L-ornithine-binding positions include asparagine 161, aspartate 221, and 225-226 (SM). Residues 261-262 (CL) and arginine 289 each bind carbamoyl phosphate.

The protein belongs to the aspartate/ornithine carbamoyltransferase superfamily. OTCase family.

The protein localises to the cytoplasm. It catalyses the reaction carbamoyl phosphate + L-ornithine = L-citrulline + phosphate + H(+). It participates in amino-acid biosynthesis; L-arginine biosynthesis; L-arginine from L-ornithine and carbamoyl phosphate: step 1/3. Its function is as follows. Reversibly catalyzes the transfer of the carbamoyl group from carbamoyl phosphate (CP) to the N(epsilon) atom of ornithine (ORN) to produce L-citrulline. The sequence is that of Ornithine carbamoyltransferase from Methanosarcina mazei (strain ATCC BAA-159 / DSM 3647 / Goe1 / Go1 / JCM 11833 / OCM 88) (Methanosarcina frisia).